The chain runs to 494 residues: Neuronal pentraxin receptor (494 aa).

Residues Met1–Lys2 are Cytoplasmic-facing. The helical; Signal-anchor for type II membrane protein transmembrane segment at Phe3–Ile23 threads the bilayer. The Extracellular segment spans residues Ala24–Ala494. The segment at Pro37–Ser80 is disordered. A glycan (N-linked (GlcNAc...) asparagine) is linked at Asn42. Low complexity-rich tracts occupy residues Ala43–Gln62 and Gly69–Ser80. The N-linked (GlcNAc...) asparagine glycan is linked to Asn211. Residues Asp286 to Cys488 form the Pentraxin (PTX) domain. Residues Cys316 and Cys377 are joined by a disulfide bond. 5 residues coordinate Ca(2+): Asn341, Glu419, Gln420, Asp421, and Gln431. Residue Asn457 is glycosylated (N-linked (GlcNAc...) asparagine).

As to quaternary structure, interacts with KLHL2. Heteropentamer with NPTX1 and/or NPTX2. Also binds taipoxin-associated calcium-binding protein 49 (TCBP49/RCN2). Ca(2+) serves as cofactor. N-glycosylated. Post-translationally, ubiquitinated by a cullin-RING-based BCR (BTB-CUL3-RBX1) E3 ubiquitin-protein ligase complex containing KLHL2. In terms of tissue distribution, brain specific.

The protein localises to the membrane. In terms of biological role, may be involved in mediating uptake of synaptic material during synapse remodeling or in mediating the synaptic clustering of AMPA glutamate receptors at a subset of excitatory synapses. This is Neuronal pentraxin receptor (Nptxr) from Rattus norvegicus (Rat).